A 159-amino-acid polypeptide reads, in one-letter code: Photosystem II extrinsic protein U, chloroplastic (159 aa).

The protein belongs to the PsbU family. In terms of assembly, PSII is composed of 1 copy each of membrane proteins PsbA, PsbB, PsbC, PsbD, PsbE, PsbF, PsbH, PsbI, PsbJ, PsbK, PsbL, PsbM, PsbT, PsbX, PsbY, PsbZ, Psb30/Ycf12, at least 3 peripheral proteins of the oxygen-evolving complex and a large number of cofactors. It forms dimeric complexes. Part of the oxygen-evolving complex of photosystem II.

It is found in the plastid. Its subcellular location is the chloroplast thylakoid membrane. Its function is as follows. One of the extrinsic, lumenal subunits of photosystem II (PSII). PSII is a light-driven water plastoquinone oxidoreductase, using light energy to abstract electrons from H(2)O, generating a proton gradient subsequently used for ATP formation. The extrinsic proteins stabilize the structure of photosystem II oxygen-evolving complex (OEC), the ion environment of oxygen evolution and protect the OEC against heat-induced inactivation. The chain is Photosystem II extrinsic protein U, chloroplastic from Karenia brevis (Red tide dinoflagellate).